The primary structure comprises 178 residues: ATP synthase subunit delta (178 aa).

This sequence belongs to the ATPase delta chain family. F-type ATPases have 2 components, F(1) - the catalytic core - and F(0) - the membrane proton channel. F(1) has five subunits: alpha(3), beta(3), gamma(1), delta(1), epsilon(1). F(0) has three main subunits: a(1), b(2) and c(10-14). The alpha and beta chains form an alternating ring which encloses part of the gamma chain. F(1) is attached to F(0) by a central stalk formed by the gamma and epsilon chains, while a peripheral stalk is formed by the delta and b chains.

It localises to the cell membrane. Functionally, f(1)F(0) ATP synthase produces ATP from ADP in the presence of a proton or sodium gradient. F-type ATPases consist of two structural domains, F(1) containing the extramembraneous catalytic core and F(0) containing the membrane proton channel, linked together by a central stalk and a peripheral stalk. During catalysis, ATP synthesis in the catalytic domain of F(1) is coupled via a rotary mechanism of the central stalk subunits to proton translocation. Its function is as follows. This protein is part of the stalk that links CF(0) to CF(1). It either transmits conformational changes from CF(0) to CF(1) or is implicated in proton conduction. This is ATP synthase subunit delta from Streptococcus pyogenes serotype M2 (strain MGAS10270).